A 537-amino-acid chain; its full sequence is Methionine--tRNA ligase (537 aa).

The short motif at 11–21 (AYPNAAPHIGH) is the 'HIGH' region element. Residues 301–305 (KMSKS) carry the 'KMSKS' region motif. K304 is a binding site for ATP. A disordered region spans residues 503-537 (PPPTGVFPRYQPSEIEGADPVKSSSKRREHNKRRE). Residues 526–537 (SSKRREHNKRRE) are compositionally biased toward basic residues.

This sequence belongs to the class-I aminoacyl-tRNA synthetase family. MetG type 2B subfamily. In terms of assembly, monomer.

The protein localises to the cytoplasm. It carries out the reaction tRNA(Met) + L-methionine + ATP = L-methionyl-tRNA(Met) + AMP + diphosphate. Its function is as follows. Is required not only for elongation of protein synthesis but also for the initiation of all mRNA translation through initiator tRNA(fMet) aminoacylation. The polypeptide is Methionine--tRNA ligase (Mycobacterium leprae (strain TN)).